Here is a 581-residue protein sequence, read N- to C-terminus: FAD-linked oxidoreductase easE (581 aa).

The N-terminal stretch at 1–25 (MYRLLGPLACLALAWFFTWAPSGRC) is a signal peptide. Asn44 and Asn73 each carry an N-linked (GlcNAc...) asparagine glycan. The FAD-binding PCMH-type domain occupies 122–306 (HQGRIPLYSA…AQATIRVFPD (185 aa)). Asn369 carries N-linked (GlcNAc...) asparagine glycosylation.

It belongs to the oxygen-dependent FAD-linked oxidoreductase family. FAD is required as a cofactor.

It functions in the pathway alkaloid biosynthesis; ergot alkaloid biosynthesis. In terms of biological role, FAD-linked oxidoreductase; part of the gene cluster that mediates the biosynthesis of fungal ergot alkaloid. DmaW catalyzes the first step of ergot alkaloid biosynthesis by condensing dimethylallyl diphosphate (DMAP) and tryptophan to form 4-dimethylallyl-L-tryptophan. The second step is catalyzed by the methyltransferase easF that methylates 4-dimethylallyl-L-tryptophan in the presence of S-adenosyl-L-methionine, resulting in the formation of 4-dimethylallyl-L-abrine. The catalase easC and the FAD-dependent oxidoreductase easE then transform 4-dimethylallyl-L-abrine to chanoclavine-I which is further oxidized by easD in the presence of NAD(+), resulting in the formation of chanoclavine-I aldehyde. Agroclavine dehydrogenase easG then mediates the conversion of chanoclavine-I aldehyde to agroclavine via a non-enzymatic adduct reaction: the substrate is an iminium intermediate that is formed spontaneously from chanoclavine-I aldehyde in the presence of glutathione. Further conversion of agroclavine to paspalic acid is a two-step process involving oxidation of agroclavine to elymoclavine and of elymoclavine to paspalic acid, the second step being performed by the elymoclavine oxidase cloA. However, cloA does not encode a functional enzyme indicating that C.fusiformis terminates its ergot alkaloid pathway at elymoclavine. This Claviceps fusiformis (Ergot fungus) protein is FAD-linked oxidoreductase easE.